Consider the following 186-residue polypeptide: Threonylcarbamoyl-AMP synthase (186 aa).

One can recognise a YrdC-like domain in the interval 2-186; sequence VSNLQQVVKA…ARTEQLLRQG (185 aa).

Belongs to the SUA5 family. TsaC subfamily.

The protein localises to the cytoplasm. The catalysed reaction is L-threonine + hydrogencarbonate + ATP = L-threonylcarbamoyladenylate + diphosphate + H2O. In terms of biological role, required for the formation of a threonylcarbamoyl group on adenosine at position 37 (t(6)A37) in tRNAs that read codons beginning with adenine. Catalyzes the conversion of L-threonine, HCO(3)(-)/CO(2) and ATP to give threonylcarbamoyl-AMP (TC-AMP) as the acyladenylate intermediate, with the release of diphosphate. This is Threonylcarbamoyl-AMP synthase from Vibrio vulnificus (strain CMCP6).